A 425-amino-acid chain; its full sequence is Tol-Pal system protein TolB (425 aa).

An N-terminal signal peptide occupies residues 1–25; the sequence is MTRKHILSFALMTALGMTVTSTAFA.

Belongs to the TolB family. As to quaternary structure, the Tol-Pal system is composed of five core proteins: the inner membrane proteins TolA, TolQ and TolR, the periplasmic protein TolB and the outer membrane protein Pal. They form a network linking the inner and outer membranes and the peptidoglycan layer.

The protein localises to the periplasm. Its function is as follows. Part of the Tol-Pal system, which plays a role in outer membrane invagination during cell division and is important for maintaining outer membrane integrity. In Acinetobacter baylyi (strain ATCC 33305 / BD413 / ADP1), this protein is Tol-Pal system protein TolB.